Reading from the N-terminus, the 271-residue chain is Acyl-[acyl-carrier-protein]--UDP-N-acetylglucosamine O-acyltransferase (271 aa).

This sequence belongs to the transferase hexapeptide repeat family. LpxA subfamily. In terms of assembly, homotrimer.

Its subcellular location is the cytoplasm. It catalyses the reaction a (3R)-hydroxyacyl-[ACP] + UDP-N-acetyl-alpha-D-glucosamine = a UDP-3-O-[(3R)-3-hydroxyacyl]-N-acetyl-alpha-D-glucosamine + holo-[ACP]. Its pathway is glycolipid biosynthesis; lipid IV(A) biosynthesis; lipid IV(A) from (3R)-3-hydroxytetradecanoyl-[acyl-carrier-protein] and UDP-N-acetyl-alpha-D-glucosamine: step 1/6. Involved in the biosynthesis of lipid A, a phosphorylated glycolipid that anchors the lipopolysaccharide to the outer membrane of the cell. In Ralstonia nicotianae (strain ATCC BAA-1114 / GMI1000) (Ralstonia solanacearum), this protein is Acyl-[acyl-carrier-protein]--UDP-N-acetylglucosamine O-acyltransferase.